The sequence spans 256 residues: Thiazole synthase (256 aa).

The active-site Schiff-base intermediate with DXP is the Lys97. Residues Gly158, 184–185, and 206–207 each bind 1-deoxy-D-xylulose 5-phosphate; these read AG and NT.

It belongs to the ThiG family. Homotetramer. Forms heterodimers with either ThiH or ThiS.

It localises to the cytoplasm. The enzyme catalyses [ThiS sulfur-carrier protein]-C-terminal-Gly-aminoethanethioate + 2-iminoacetate + 1-deoxy-D-xylulose 5-phosphate = [ThiS sulfur-carrier protein]-C-terminal Gly-Gly + 2-[(2R,5Z)-2-carboxy-4-methylthiazol-5(2H)-ylidene]ethyl phosphate + 2 H2O + H(+). The protein operates within cofactor biosynthesis; thiamine diphosphate biosynthesis. In terms of biological role, catalyzes the rearrangement of 1-deoxy-D-xylulose 5-phosphate (DXP) to produce the thiazole phosphate moiety of thiamine. Sulfur is provided by the thiocarboxylate moiety of the carrier protein ThiS. In vitro, sulfur can be provided by H(2)S. This is Thiazole synthase from Pelotomaculum thermopropionicum (strain DSM 13744 / JCM 10971 / SI).